We begin with the raw amino-acid sequence, 347 residues long: D-alanine--D-alanine ligase (347 aa).

Residues 131 to 333 (KRVLESAGIA…YPDLIERLVE (203 aa)) enclose the ATP-grasp domain. Residue 161–216 (EEELTYPVFTKPSNMGSSVGISKSENQEELRQALKLAFQYDSRVLVEQGVNAREIE) coordinates ATP. The Mg(2+) site is built by D287, E300, and N302.

This sequence belongs to the D-alanine--D-alanine ligase family. Mg(2+) serves as cofactor. The cofactor is Mn(2+).

The protein resides in the cytoplasm. The enzyme catalyses 2 D-alanine + ATP = D-alanyl-D-alanine + ADP + phosphate + H(+). It participates in cell wall biogenesis; peptidoglycan biosynthesis. In terms of biological role, cell wall formation. The sequence is that of D-alanine--D-alanine ligase from Streptococcus pneumoniae (strain Hungary19A-6).